The chain runs to 417 residues: Gamma-glutamyl phosphate reductase (417 aa).

It belongs to the gamma-glutamyl phosphate reductase family.

It localises to the cytoplasm. The enzyme catalyses L-glutamate 5-semialdehyde + phosphate + NADP(+) = L-glutamyl 5-phosphate + NADPH + H(+). It functions in the pathway amino-acid biosynthesis; L-proline biosynthesis; L-glutamate 5-semialdehyde from L-glutamate: step 2/2. Its function is as follows. Catalyzes the NADPH-dependent reduction of L-glutamate 5-phosphate into L-glutamate 5-semialdehyde and phosphate. The product spontaneously undergoes cyclization to form 1-pyrroline-5-carboxylate. This Haemophilus influenzae (strain PittEE) protein is Gamma-glutamyl phosphate reductase.